We begin with the raw amino-acid sequence, 100 residues long: MSKLFESRLADVIRKPVITEKATNALDLNQYTFEVDHRAAKPQIKAAIEALFNVKVIGINTMNPPRRTRRVGKFSGKRSQVKKAIVRLAEGDKIQLFPES.

It belongs to the universal ribosomal protein uL23 family. As to quaternary structure, part of the 50S ribosomal subunit. Contacts protein L29, and trigger factor when it is bound to the ribosome.

In terms of biological role, one of the early assembly proteins it binds 23S rRNA. One of the proteins that surrounds the polypeptide exit tunnel on the outside of the ribosome. Forms the main docking site for trigger factor binding to the ribosome. The polypeptide is Large ribosomal subunit protein uL23 (Prochlorococcus marinus (strain MIT 9515)).